We begin with the raw amino-acid sequence, 71 residues long: High-potential iron-sulfur protein (71 aa).

Glutamine 1 bears the Pyrrolidone carboxylic acid mark. The [4Fe-4S] cluster site is built by cysteine 37, cysteine 40, cysteine 50, and cysteine 64.

Belongs to the high-potential iron-sulfur protein (HiPIP) family. In terms of assembly, homodimer.

Functionally, specific class of high-redox-potential 4Fe-4S ferredoxins. Functions in anaerobic electron transport in most purple and in some other photosynthetic bacteria and in at least one genus (Paracoccus) of halophilic, denitrifying bacteria. This is High-potential iron-sulfur protein (hip) from Halomonas halodenitrificans (strain ATCC 12084 / NCIMB 8669) (Paracoccus halodenitrificans).